Here is a 305-residue protein sequence, read N- to C-terminus: tRNA dimethylallyltransferase (305 aa).

8-15 (GPTGTGKS) lines the ATP pocket. 10-15 (TGTGKS) is a substrate binding site.

Belongs to the IPP transferase family. As to quaternary structure, monomer. Mg(2+) serves as cofactor.

It catalyses the reaction adenosine(37) in tRNA + dimethylallyl diphosphate = N(6)-dimethylallyladenosine(37) in tRNA + diphosphate. Catalyzes the transfer of a dimethylallyl group onto the adenine at position 37 in tRNAs that read codons beginning with uridine, leading to the formation of N6-(dimethylallyl)adenosine (i(6)A). The chain is tRNA dimethylallyltransferase from Mycobacterium sp. (strain KMS).